Here is a 446-residue protein sequence, read N- to C-terminus: Branched-chain amino acid permease BrnQ (446 aa).

The next 12 membrane-spanning stretches (helical) occupy residues 13-33 (ISSMLFGLFFGAGNLIFPAYL), 41-61 (LWISLLGFLITGVGLPLLAIA), 81-101 (KYSYFFTCLLYLTIGPFFAIP), 120-140 (MAKSTGLFIFSLIFFAIMLFF), 154-174 (FLTPAFLLFFFFIMIMALLHP), 196-216 (VLAGYNTMDALAGLAFGIIVI), 237-257 (TGVLTCLLMAVIYAITALVGA), 285-305 (GAVIFALMIFVACLKTAIGLI), 325-345 (WAIIFSLLAFGIANVGLTTII), 347-367 (FSLPVLMLLYPLAISLILLAL), 381-401 (IMTAVTFLCALGDFFKALPAG), and 421-441 (GLGWLVPVTVIFAILAIKGVI).

The protein belongs to the branched chain amino acid transporter family.

It localises to the cell membrane. Its activity is regulated as follows. Leucine uptake is inhibited by the proton ionophore carbonyl cyanide m-chlorophenylhydrazone (CCCP). Functionally, branched chain amino acid transport system which is involved in the uptake of leucine, valine and isoleucine. The proton motive force is probably the driving force for transport. In Lactobacillus delbrueckii subsp. lactis, this protein is Branched-chain amino acid permease BrnQ.